A 229-amino-acid chain; its full sequence is DNA repair protein RecO (229 aa).

It belongs to the RecO family.

Involved in DNA repair and RecF pathway recombination. This is DNA repair protein RecO from Legionella pneumophila (strain Corby).